A 132-amino-acid chain; its full sequence is Small ribosomal subunit protein uS8 (132 aa).

It belongs to the universal ribosomal protein uS8 family. As to quaternary structure, part of the 30S ribosomal subunit. Contacts proteins S5 and S12.

Functionally, one of the primary rRNA binding proteins, it binds directly to 16S rRNA central domain where it helps coordinate assembly of the platform of the 30S subunit. The polypeptide is Small ribosomal subunit protein uS8 (Treponema pallidum (strain Nichols)).